The sequence spans 271 residues: Insulin-like growth factor-binding protein 5 (271 aa).

The N-terminal stretch at 1–19 (MVLTAVLLLLAACAGPAQG) is a signal peptide. Positions 22-102 (SFVHCEPCDE…LHGRGVCLNE (81 aa)) constitute an IGFBP N-terminal domain. Intrachain disulfides connect C26–C52, C29–C54, C37–C55, C44–C58, C66–C79, and C73–C99. Positions 109-121 (AKIERDSREHEEP) are enriched in basic and acidic residues. The segment at 109-129 (AKIERDSREHEEPTTSEMAEE) is disordered. Residue S115 is modified to Phosphoserine. Residues 188–262 (QGPCRRHMEA…MEYVDGDFQC (75 aa)) form the Thyroglobulin type-1 domain. 3 cysteine pairs are disulfide-bonded: C191/C218, C229/C240, and C242/C262.

Interacts with IGF1; this interaction enhances the growth stimulatory effects of IGF1 on fibroblasts. Interacts with CAV1; this interaction allows trafficking of IGFBP5 from the plasma membrane to the nucleus. Interacts with NCL; this interaction is necessary for IGFBP5 localization to the nucleus.

It localises to the secreted. Its subcellular location is the cytoplasm. The protein localises to the nucleus. In terms of biological role, multifunctional protein that plays a critical role in regulating the availability of IGFs to their receptors and thereby regulates IGF-mediated cellular processes including proliferation, differentiation, and apoptosis in a cell-type specific manner. Increases the cell proliferation of osteoblasts, intestinal smooth muscle cells and neuroblastoma cells. Enhances adhesion and survival of epithelial cells but decreases adhesion of mesenchymal cells. Once secreted, acts as a major mediator of mTORC1-dependent feedback inhibition of IGF1 signaling. Also plays a role in the induction of extracellular matrix (ECM) production and deposition independently of its nuclear translocation and binding to IGFs. Acts itself as a growth factor that can act independently of IGFs to regulate bone formation. Acts as a ligand for the ROR1 receptor which triggers formation of ROR1/HER2 heterodimer to enhance CREB oncogenic signaling. The polypeptide is Insulin-like growth factor-binding protein 5 (IGFBP5) (Sus scrofa (Pig)).